A 486-amino-acid chain; its full sequence is UDP-N-acetylmuramoyl-L-alanyl-D-glutamate--2,6-diaminopimelate ligase (486 aa).

UDP-N-acetyl-alpha-D-muramoyl-L-alanyl-D-glutamate is bound at residue Ser-26. ATP is bound at residue 104 to 110; sequence GTNGKTS. UDP-N-acetyl-alpha-D-muramoyl-L-alanyl-D-glutamate-binding positions include 152–153, Ser-179, Gln-185, and Arg-187; that span reads TT. Lys-219 is modified (N6-carboxylysine). Meso-2,6-diaminopimelate-binding positions include Arg-383, 407 to 410, Gly-455, and Glu-459; that span reads DNPR. The Meso-diaminopimelate recognition motif signature appears at 407–410; the sequence is DNPR.

This sequence belongs to the MurCDEF family. MurE subfamily. Mg(2+) serves as cofactor. Carboxylation is probably crucial for Mg(2+) binding and, consequently, for the gamma-phosphate positioning of ATP.

Its subcellular location is the cytoplasm. The catalysed reaction is UDP-N-acetyl-alpha-D-muramoyl-L-alanyl-D-glutamate + meso-2,6-diaminopimelate + ATP = UDP-N-acetyl-alpha-D-muramoyl-L-alanyl-gamma-D-glutamyl-meso-2,6-diaminopimelate + ADP + phosphate + H(+). The protein operates within cell wall biogenesis; peptidoglycan biosynthesis. Catalyzes the addition of meso-diaminopimelic acid to the nucleotide precursor UDP-N-acetylmuramoyl-L-alanyl-D-glutamate (UMAG) in the biosynthesis of bacterial cell-wall peptidoglycan. This chain is UDP-N-acetylmuramoyl-L-alanyl-D-glutamate--2,6-diaminopimelate ligase, found in Caulobacter vibrioides (strain ATCC 19089 / CIP 103742 / CB 15) (Caulobacter crescentus).